The following is a 117-amino-acid chain: UPF0295 protein GTNG_0491 (117 aa).

2 helical membrane-spanning segments follow: residues 12–32 (IRTF…LGLF) and 42–62 (LFMV…FWIG).

It belongs to the UPF0295 family.

The protein localises to the cell membrane. This is UPF0295 protein GTNG_0491 from Geobacillus thermodenitrificans (strain NG80-2).